Here is a 103-residue protein sequence, read N- to C-terminus: SOSS complex subunit C (103 aa).

The protein belongs to the SOSS-C family. As to quaternary structure, belongs to the multiprotein complex Integrator. Component of the SOSS complex, composed of SOSS-B (SOSS-B1/NABP2 or SOSS-B2/NABP1), SOSS-A/INTS3 and SOSS-C/INIP.

Its subcellular location is the nucleus. In terms of biological role, component of the SOSS complex, a multiprotein complex that functions downstream of the MRN complex to promote DNA repair and G2/M checkpoint. The SOSS complex associates with single-stranded DNA at DNA lesions and influences diverse endpoints in the cellular DNA damage response including cell-cycle checkpoint activation, recombinational repair and maintenance of genomic stability. Required for efficient homologous recombination-dependent repair of double-strand breaks (DSBs). In Gallus gallus (Chicken), this protein is SOSS complex subunit C (INIP).